Reading from the N-terminus, the 236-residue chain is 2-C-methyl-D-erythritol 4-phosphate cytidylyltransferase (236 aa).

The protein belongs to the IspD/TarI cytidylyltransferase family. IspD subfamily.

The enzyme catalyses 2-C-methyl-D-erythritol 4-phosphate + CTP + H(+) = 4-CDP-2-C-methyl-D-erythritol + diphosphate. Its pathway is isoprenoid biosynthesis; isopentenyl diphosphate biosynthesis via DXP pathway; isopentenyl diphosphate from 1-deoxy-D-xylulose 5-phosphate: step 2/6. Functionally, catalyzes the formation of 4-diphosphocytidyl-2-C-methyl-D-erythritol from CTP and 2-C-methyl-D-erythritol 4-phosphate (MEP). The protein is 2-C-methyl-D-erythritol 4-phosphate cytidylyltransferase of Pseudomonas syringae pv. tomato (strain ATCC BAA-871 / DC3000).